The sequence spans 429 residues: Glutamyl-tRNA reductase (429 aa).

Residues 56 to 59 (TCNR), S119, 124 to 126 (EPQ), and Q130 contribute to the substrate site. The Nucleophile role is filled by C57. 199 to 204 (GAGEMI) contacts NADP(+).

The protein belongs to the glutamyl-tRNA reductase family. As to quaternary structure, homodimer.

It catalyses the reaction (S)-4-amino-5-oxopentanoate + tRNA(Glu) + NADP(+) = L-glutamyl-tRNA(Glu) + NADPH + H(+). It participates in porphyrin-containing compound metabolism; protoporphyrin-IX biosynthesis; 5-aminolevulinate from L-glutamyl-tRNA(Glu): step 1/2. Catalyzes the NADPH-dependent reduction of glutamyl-tRNA(Glu) to glutamate 1-semialdehyde (GSA). The sequence is that of Glutamyl-tRNA reductase from Janthinobacterium sp. (strain Marseille) (Minibacterium massiliensis).